The primary structure comprises 438 residues: MYHDYASKLLADYRSDPPLWESDLPRHNRYSDNILNSRYCGNKNGAAPVYNEYTNSPEKAEKGLQLSDLRNFSFMLNPQHKNIGYGDAQDLEPYSSIPKNKLFNHFKNHRPAFSTHTENLIRRNVVRTEKKTFPQVASLKGTQKNCLTQPSSLPSLKNPKNSSVPSTRFSEHTKFFSYEDIPKLKTKGTIKHEQHLGDQMPGQHYNGYIPHKDVYNILCLAHNLPASVEKGIAGRGIPLGNPHVKPNIEQELIKSTSTYTGVPMLGPLPPKDSQHGREYQEFSANRHMLQVANILHSVFANHSIKPQILEDIPVLNAQLTSIKPVSPFLNKAYQTHYMENIVTLVPRFKSIANYSSPIPNYSKRNSGQAEYFDTSKQTISRHNNYIPKYTGGIGDSKLDSTFPKDFNASSVPLTSAEKDHSLRGDNSACCISSISPSL.

Residues 145–167 (NCLTQPSSLPSLKNPKNSSVPST) form a disordered region.

This sequence belongs to the asfivirus p49 structural protein family.

The protein resides in the virion. Together with the penton and the other minor capsid proteins (M1249L, p17), forms a complicated network immediately below the outer capsid shell, stabilizing the whole capsid. Plays an essential role in the formation of infectious virus particles. Especially required for the formation of the capsid vertices. During virion assembly, associates with the membrane and probably mediates the docking of the penton complex to the inner membrane, where it recruits the capsomers to form the penton core. The polypeptide is Minor capsid protein p49 (Ornithodoros (relapsing fever ticks)).